A 30-amino-acid polypeptide reads, in one-letter code: MISDIQIMVALFAALFTGILALRLGTELYK.

A helical membrane pass occupies residues 7-26; that stretch reads IMVALFAALFTGILALRLGT.

It belongs to the PsaM family.

Its subcellular location is the plastid. It is found in the chloroplast thylakoid membrane. This Mesostigma viride (Green alga) protein is Photosystem I reaction center subunit XII.